Reading from the N-terminus, the 1035-residue chain is FERM domain-containing protein 4B (1035 aa).

In terms of domain architecture, FERM spans 59-361 (RHCQVHLLDD…SQHQFYLDRK (303 aa)). Serine 372 carries the phosphoserine modification. 2 coiled-coil regions span residues 414–451 (QDSE…LKKI) and 535–559 (KQDY…RIRC). Residues 542–972 (VKRLQEIENS…TQLTIGLSEY (431 aa)) form a necessary for adherens junction and tight junction localization region. Disordered regions lie at residues 563-615 (PSQK…ILPP), 631-699 (NEQF…LESQ), 713-738 (FTLS…SQSS), and 754-798 (TQTL…SKGQ). The span at 571–590 (PPEDIIPSESSSLSDTTTYD) shows a compositional bias: low complexity. A compositionally biased stretch (polar residues) spans 594 to 607 (DSFTLAGQRPSSVP). A Phosphoserine modification is found at serine 609. The segment covering 635 to 644 (MDTRHSREML) has biased composition (basic and acidic residues). Composition is skewed to polar residues over residues 664 to 699 (MPTT…LESQ) and 715 to 725 (LSKSQRSSSTE). A Phosphoserine modification is found at serine 698. Residues 762–771 (RGRRRSKKHS) show a composition bias toward basic residues. The span at 772–782 (VSTSNSGSMPN) shows a compositional bias: polar residues. Lysine 883 is covalently cross-linked (Glycyl lysine isopeptide (Lys-Gly) (interchain with G-Cter in SUMO2)). 3 disordered regions span residues 906–926 (RASG…SDRG), 939–958 (PCSP…TNAS), and 994–1035 (PSRQ…GTLV). Residues 907–921 (ASGQKDQGHSPQTSF) show a composition bias toward polar residues. Serine 916 is subject to Phosphoserine. The span at 941–958 (SPSSRASSYSSVSSTNAS) shows a compositional bias: low complexity. Residues 1019–1035 (SEQRLFWHEDSKPGTLV) are compositionally biased toward basic and acidic residues. Residue lysine 1030 forms a Glycyl lysine isopeptide (Lys-Gly) (interchain with G-Cter in SUMO2) linkage.

In terms of assembly, interacts with CYTH3. Interacts with PARD3. Interacts with CYTH1. Isoform 1 is expressed in the brain. Isoform 2 is expressed in the lung (at protein level).

It is found in the cytoplasm. The protein resides in the cytoskeleton. It localises to the cell junction. The protein localises to the tight junction. Its subcellular location is the adherens junction. Its function is as follows. Member of GRP1 signaling complexes that are acutely recruited to plasma membrane ruffles in response to insulin receptor signaling. May function as a scaffolding protein that regulates epithelial cell polarity by connecting ARF6 activation with the PAR3 complex. Plays a redundant role with FRMD4A in epithelial polarization. The polypeptide is FERM domain-containing protein 4B (Frmd4b) (Mus musculus (Mouse)).